Consider the following 273-residue polypeptide: Large ribosomal subunit protein uL2 (273 aa).

Disordered stretches follow at residues 28-54 and 221-273; these read KPYA…TRHI and RGTA…RRTK. Over residues 39 to 48 the composition is skewed to low complexity; sequence KSGGRNNNGR.

It belongs to the universal ribosomal protein uL2 family. Part of the 50S ribosomal subunit. Forms a bridge to the 30S subunit in the 70S ribosome.

Functionally, one of the primary rRNA binding proteins. Required for association of the 30S and 50S subunits to form the 70S ribosome, for tRNA binding and peptide bond formation. It has been suggested to have peptidyltransferase activity; this is somewhat controversial. Makes several contacts with the 16S rRNA in the 70S ribosome. The protein is Large ribosomal subunit protein uL2 of Pectobacterium carotovorum subsp. carotovorum (strain PC1).